A 478-amino-acid chain; its full sequence is Subtilisin-like protease 3 (478 aa).

The signal sequence occupies residues 1-17; the sequence is MKFSTILPILWANCCLC. Residues 70–167 enclose the Inhibitor I9 domain; the sequence is RYVIVFNEDI…FVEQETTVKI (98 aa). A Peptidase S8 domain is found at 177–478; that stretch reads PWGLHRVSHR…GGGKKLDGFW (302 aa). Active-site charge relay system residues include D213, H245, and S407.

Belongs to the peptidase S8 family.

Serine protease with unknown substrate. The chain is Subtilisin-like protease 3 (YSP3) from Saccharomyces cerevisiae (strain ATCC 204508 / S288c) (Baker's yeast).